A 422-amino-acid polypeptide reads, in one-letter code: Phosphoserine aminotransferase 2, chloroplastic (422 aa).

A chloroplast-targeting transit peptide spans 1–50 (MAASTNSFLIGNQTQIPSLKPKSISQSFIHFTKPNTINLTTRTKSVSIRC). N-acetylalanine is present on alanine 51. Residue arginine 101 coordinates L-glutamate. Pyridoxal 5'-phosphate contacts are provided by residues 135-136 (AT), tryptophan 161, threonine 211, aspartate 233, and glutamine 256. Lysine 257 is modified (N6-(pyridoxal phosphate)lysine). 298-299 (NT) is a pyridoxal 5'-phosphate binding site.

This sequence belongs to the class-V pyridoxal-phosphate-dependent aminotransferase family. SerC subfamily. Requires pyridoxal 5'-phosphate as cofactor.

The protein resides in the plastid. The protein localises to the chloroplast. The catalysed reaction is O-phospho-L-serine + 2-oxoglutarate = 3-phosphooxypyruvate + L-glutamate. The enzyme catalyses 4-(phosphooxy)-L-threonine + 2-oxoglutarate = (R)-3-hydroxy-2-oxo-4-phosphooxybutanoate + L-glutamate. Its pathway is amino-acid biosynthesis; L-serine biosynthesis; L-serine from 3-phospho-D-glycerate: step 2/3. In terms of biological role, involved in the plastidial phosphorylated pathway of serine biosynthesis (PPSB). Catalyzes the reversible conversion of 3-phosphohydroxypyruvate to phosphoserine. This Arabidopsis thaliana (Mouse-ear cress) protein is Phosphoserine aminotransferase 2, chloroplastic (PSAT2).